Consider the following 364-residue polypeptide: tRNA N6-adenosine threonylcarbamoyltransferase (364 aa).

2 residues coordinate Fe cation: His-115 and His-119. Substrate is bound by residues 137–141 (LVSGG), Asp-170, Gly-183, and Asn-288. Asp-316 is a Fe cation binding site. Positions 341-364 (PRSRWPLDEKSAPLIGTGRRGTKA) are disordered.

It belongs to the KAE1 / TsaD family. Fe(2+) is required as a cofactor.

The protein resides in the cytoplasm. The catalysed reaction is L-threonylcarbamoyladenylate + adenosine(37) in tRNA = N(6)-L-threonylcarbamoyladenosine(37) in tRNA + AMP + H(+). Required for the formation of a threonylcarbamoyl group on adenosine at position 37 (t(6)A37) in tRNAs that read codons beginning with adenine. Is involved in the transfer of the threonylcarbamoyl moiety of threonylcarbamoyl-AMP (TC-AMP) to the N6 group of A37, together with TsaE and TsaB. TsaD likely plays a direct catalytic role in this reaction. In Bartonella henselae (strain ATCC 49882 / DSM 28221 / CCUG 30454 / Houston 1) (Rochalimaea henselae), this protein is tRNA N6-adenosine threonylcarbamoyltransferase.